Here is a 101-residue protein sequence, read N- to C-terminus: Urease subunit beta (101 aa).

Belongs to the urease beta subunit family. In terms of assembly, heterotrimer of UreA (gamma), UreB (beta) and UreC (alpha) subunits. Three heterotrimers associate to form the active enzyme.

Its subcellular location is the cytoplasm. The enzyme catalyses urea + 2 H2O + H(+) = hydrogencarbonate + 2 NH4(+). The protein operates within nitrogen metabolism; urea degradation; CO(2) and NH(3) from urea (urease route): step 1/1. The sequence is that of Urease subunit beta from Psychromonas ingrahamii (strain DSM 17664 / CCUG 51855 / 37).